Consider the following 491-residue polypeptide: Probable glycine dehydrogenase (decarboxylating) subunit 2 (491 aa).

N6-(pyridoxal phosphate)lysine is present on lysine 264.

Belongs to the GcvP family. C-terminal subunit subfamily. As to quaternary structure, the glycine cleavage system is composed of four proteins: P, T, L and H. In this organism, the P 'protein' is a heterodimer of two subunits. It depends on pyridoxal 5'-phosphate as a cofactor.

It carries out the reaction N(6)-[(R)-lipoyl]-L-lysyl-[glycine-cleavage complex H protein] + glycine + H(+) = N(6)-[(R)-S(8)-aminomethyldihydrolipoyl]-L-lysyl-[glycine-cleavage complex H protein] + CO2. Its function is as follows. The glycine cleavage system catalyzes the degradation of glycine. The P protein binds the alpha-amino group of glycine through its pyridoxal phosphate cofactor; CO(2) is released and the remaining methylamine moiety is then transferred to the lipoamide cofactor of the H protein. This Coxiella burnetii (strain Dugway 5J108-111) protein is Probable glycine dehydrogenase (decarboxylating) subunit 2.